The chain runs to 84 residues: Delta-thalatoxin-Cad1a (84 aa).

A signal peptide spans 1–19 (MAYLKIVLVALMLVLAVSA). The propeptide occupies 20 to 33 (MRRPDQQDQDISVA). Intrachain disulfides connect Cys38-Cys78, Cys40-Cys68, and Cys61-Cys79.

This sequence belongs to the sea anemone sodium channel inhibitory toxin family. Type II subfamily.

The protein localises to the secreted. Its subcellular location is the nematocyst. Its function is as follows. Binds specifically to the voltage-gated sodium channel (Nav) and delays its inactivation. In Cryptodendrum adhaesivum (Adhesive sea anemone), this protein is Delta-thalatoxin-Cad1a.